The chain runs to 306 residues: Ribonuclease Z (306 aa).

Zn(2+) contacts are provided by H63, H65, D67, H68, H141, D211, and H269. The Proton acceptor role is filled by D67.

The protein belongs to the RNase Z family. As to quaternary structure, homodimer. Zn(2+) is required as a cofactor.

It catalyses the reaction Endonucleolytic cleavage of RNA, removing extra 3' nucleotides from tRNA precursor, generating 3' termini of tRNAs. A 3'-hydroxy group is left at the tRNA terminus and a 5'-phosphoryl group is left at the trailer molecule.. In terms of biological role, zinc phosphodiesterase, which displays some tRNA 3'-processing endonuclease activity. Probably involved in tRNA maturation, by removing a 3'-trailer from precursor tRNA. The protein is Ribonuclease Z of Staphylococcus epidermidis (strain ATCC 12228 / FDA PCI 1200).